The chain runs to 382 residues: MLSSPTVILQPYGLPVYPQTASCYPGIVQGAAAQEAGPGNGDPSLPQVYAPPPSYPPPGQAPPTPAARLPPLDFSAAHPNSEYADHHQLRVYQGPQHDGTESITASNTDDSLAPVTSDPQSLSVSVASGSGAAGGSDEEGGGKAQPKRLHVSNIPFRFRDPDLRQMFGQFGKILDVEIIFNERGSKGFGFVTFESAVEADRAREKLNGTIVEGRKIEVNNATARVVTKKPQTPLVNAAGWKINPVMGAMYAPELYTVASFPYPVPTPTLAYRGSGLRGRGRAVYNTIRSAAAAATPAAVPAYPGVVYQEGLYGAEVYGGYPATYRVAQSASAAATATYSDGYGRVYATATDPYHHSVGPTTTYGVGTMASLYRGGYNRFTPY.

2 disordered regions span residues 34–79 and 94–148; these read QEAG…AAHP and GPQH…QPKR. Over residues 49 to 65 the composition is skewed to pro residues; the sequence is YAPPPSYPPPGQAPPTP. The segment covering 101–110 has biased composition (polar residues); the sequence is ESITASNTDD. Positions 147 to 223 constitute an RRM domain; it reads KRLHVSNIPF…RKIEVNNATA (77 aa).

In terms of tissue distribution, expressed during muscle development in adaxial cells, somites, cardiac precursors, finbuds and jaw muscle cells.

Its subcellular location is the nucleus. In terms of biological role, RNA-binding protein that regulates alternative splicing events by binding to 5'-GCAUG-3' elements. Regulates alternative splicing of tissue-specific exons. The protein is RNA binding protein fox-1 homolog 1-like (rbfox1l) of Danio rerio (Zebrafish).